We begin with the raw amino-acid sequence, 156 residues long: Large ribosomal subunit protein uL15 (156 aa).

A disordered region spans residues 1–48 (MKLHDLKPTPGSRKDRKRVGRGPGGTDKTAGRGHKGQKSRSGAGKGAF).

Belongs to the universal ribosomal protein uL15 family. Part of the 50S ribosomal subunit. Contacts proteins L4, L21 and L35.

Its function is as follows. Binds to the 23S rRNA. The chain is Large ribosomal subunit protein uL15 (rplO) from Deinococcus radiodurans (strain ATCC 13939 / DSM 20539 / JCM 16871 / CCUG 27074 / LMG 4051 / NBRC 15346 / NCIMB 9279 / VKM B-1422 / R1).